The following is a 437-amino-acid chain: Dolichyl-diphosphooligosaccharide--protein glycosyltransferase subunit wbp1 (437 aa).

The N-terminal stretch at 1-19 is a signal peptide; sequence MKSALCIALALTWSLLVQA. The Lumenal portion of the chain corresponds to 20 to 401; sequence ARQTVLAVAD…FPRFLPHAYP (382 aa). N-linked (GlcNAc...) asparagine glycans are attached at residues N275 and N289. Residues 402-422 form a helical membrane-spanning segment; it reads YYASCFSVLGAFLLFCGIWLL. The Cytoplasmic segment spans residues 423–437; the sequence is QKPAKPVVPSAKKQN.

This sequence belongs to the DDOST 48 kDa subunit family. As to quaternary structure, component of the oligosaccharyltransferase (OST) complex.

Its subcellular location is the endoplasmic reticulum. The protein localises to the membrane. It functions in the pathway protein modification; protein glycosylation. Subunit of the oligosaccharyl transferase (OST) complex that catalyzes the initial transfer of a defined glycan (Glc(3)Man(9)GlcNAc(2) in eukaryotes) from the lipid carrier dolichol-pyrophosphate to an asparagine residue within an Asn-X-Ser/Thr consensus motif in nascent polypeptide chains, the first step in protein N-glycosylation. N-glycosylation occurs cotranslationally and the complex associates with the Sec61 complex at the channel-forming translocon complex that mediates protein translocation across the endoplasmic reticulum (ER). All subunits are required for a maximal enzyme activity. This is Dolichyl-diphosphooligosaccharide--protein glycosyltransferase subunit wbp1 (wbp1) from Schizosaccharomyces pombe (strain 972 / ATCC 24843) (Fission yeast).